Here is a 592-residue protein sequence, read N- to C-terminus: ATP-binding protein Uup (592 aa).

2 consecutive ABC transporter domains span residues methionine 1–lysine 221 and phenylalanine 289–isoleucine 516. ATP is bound by residues glycine 36 to serine 43 and glycine 321 to serine 328. Residues isoleucine 516–glutamine 550 are a coiled coil. The interval phenylalanine 518–leucine 592 is C-terminal domain (CTD), binds DNA.

This sequence belongs to the ABC transporter superfamily. ABCF family. Uup subfamily.

Its subcellular location is the cytoplasm. It carries out the reaction ATP + H2O = ADP + phosphate + H(+). Functionally, probably plays a role in ribosome assembly or function. May be involved in resolution of branched DNA intermediates that result from template switching in postreplication gaps. Binds DNA and has ATPase activity. The chain is ATP-binding protein Uup from Buchnera aphidicola subsp. Schizaphis graminum (strain Sg).